The chain runs to 362 residues: NAD(P)H-quinone oxidoreductase subunit 1, chloroplastic (362 aa).

8 consecutive transmembrane segments (helical) span residues 29 to 49 (ILPILTLLLGITIEVLVIVWL), 103 to 123 (IAVISVLLSFLVIPLGYHFVL), 128 to 148 (IGVFLWIAISSIAPIGLLMAG), 164 to 184 (AAQSISYEIPLTFCVLAISLL), 202 to 222 (FFGWNIWRQPIGFLVFLISSL), 247 to 267 (YSGIKYGLFYLVSYLNLLVSS), 303 to 323 (TMGIFITLTKAYLFLFISITI), and 342 to 362 (FLLPISLGNLLLTTSFQLVSL).

Belongs to the complex I subunit 1 family. In terms of assembly, NDH is composed of at least 16 different subunits, 5 of which are encoded in the nucleus.

It localises to the plastid. Its subcellular location is the chloroplast thylakoid membrane. It catalyses the reaction a plastoquinone + NADH + (n+1) H(+)(in) = a plastoquinol + NAD(+) + n H(+)(out). It carries out the reaction a plastoquinone + NADPH + (n+1) H(+)(in) = a plastoquinol + NADP(+) + n H(+)(out). NDH shuttles electrons from NAD(P)H:plastoquinone, via FMN and iron-sulfur (Fe-S) centers, to quinones in the photosynthetic chain and possibly in a chloroplast respiratory chain. The immediate electron acceptor for the enzyme in this species is believed to be plastoquinone. Couples the redox reaction to proton translocation, and thus conserves the redox energy in a proton gradient. This Hordeum vulgare (Barley) protein is NAD(P)H-quinone oxidoreductase subunit 1, chloroplastic.